The following is a 75-amino-acid chain: Cytochrome c oxidase subunit 6C (75 aa).

Topologically, residues Met1–Gly13 are mitochondrial matrix. The helical transmembrane segment at Leu14–Arg54 threads the bilayer. Over Asn55–Lys75 the chain is Mitochondrial intermembrane.

Belongs to the cytochrome c oxidase subunit 6c family. In terms of assembly, component of the cytochrome c oxidase (complex IV, CIV), a multisubunit enzyme composed of 14 subunits. The complex is composed of a catalytic core of 3 subunits MT-CO1, MT-CO2 and MT-CO3, encoded in the mitochondrial DNA, and 11 supernumerary subunits COX4I, COX5A, COX5B, COX6A, COX6B, COX6C, COX7A, COX7B, COX7C, COX8 and NDUFA4, which are encoded in the nuclear genome. The complex exists as a monomer or a dimer and forms supercomplexes (SCs) in the inner mitochondrial membrane with NADH-ubiquinone oxidoreductase (complex I, CI) and ubiquinol-cytochrome c oxidoreductase (cytochrome b-c1 complex, complex III, CIII), resulting in different assemblies (supercomplex SCI(1)III(2)IV(1) and megacomplex MCI(2)III(2)IV(2)).

The protein localises to the mitochondrion inner membrane. It functions in the pathway energy metabolism; oxidative phosphorylation. In terms of biological role, component of the cytochrome c oxidase, the last enzyme in the mitochondrial electron transport chain which drives oxidative phosphorylation. The respiratory chain contains 3 multisubunit complexes succinate dehydrogenase (complex II, CII), ubiquinol-cytochrome c oxidoreductase (cytochrome b-c1 complex, complex III, CIII) and cytochrome c oxidase (complex IV, CIV), that cooperate to transfer electrons derived from NADH and succinate to molecular oxygen, creating an electrochemical gradient over the inner membrane that drives transmembrane transport and the ATP synthase. Cytochrome c oxidase is the component of the respiratory chain that catalyzes the reduction of oxygen to water. Electrons originating from reduced cytochrome c in the intermembrane space (IMS) are transferred via the dinuclear copper A center (CU(A)) of subunit 2 and heme A of subunit 1 to the active site in subunit 1, a binuclear center (BNC) formed by heme A3 and copper B (CU(B)). The BNC reduces molecular oxygen to 2 water molecules using 4 electrons from cytochrome c in the IMS and 4 protons from the mitochondrial matrix. The sequence is that of Cytochrome c oxidase subunit 6C (COX6C) from Carlito syrichta (Philippine tarsier).